We begin with the raw amino-acid sequence, 288 residues long: Pyruvate synthase subunit PorB (288 aa).

Residues cysteine 16, cysteine 19, and cysteine 44 each coordinate [4Fe-4S] cluster. Over residues 137–148 (STPYGASTTTSP) the composition is skewed to polar residues. The segment at 137–159 (STPYGASTTTSPHGKESFGEDRP) is disordered. Positions 149-159 (HGKESFGEDRP) are enriched in basic and acidic residues. A [4Fe-4S] cluster-binding site is contributed by cysteine 208.

Heterotetramer of one alpha, one beta, one delta and one gamma chain. It depends on [4Fe-4S] cluster as a cofactor.

It catalyses the reaction 2 oxidized [2Fe-2S]-[ferredoxin] + pyruvate + CoA = 2 reduced [2Fe-2S]-[ferredoxin] + acetyl-CoA + CO2 + H(+). The sequence is that of Pyruvate synthase subunit PorB (porB) from Methanothermobacter thermautotrophicus (strain ATCC 29096 / DSM 1053 / JCM 10044 / NBRC 100330 / Delta H) (Methanobacterium thermoautotrophicum).